Reading from the N-terminus, the 814-residue chain is Rho GTPase-activating protein 26 (814 aa).

Residues 7–262 (EFSDCCLDSP…MKENPLEHKT (256 aa)) form the BAR domain. Residues 265–369 (PYTMEGYLYV…WMEAMDGREP (105 aa)) enclose the PH domain. Positions 383-568 (AQLDSIGFSI…ILIENHEKIF (186 aa)) constitute a Rho-GAP domain. Over residues 624-648 (LESVSSNPNSILNSSSSLQPNMNSS) the composition is skewed to low complexity. Positions 624 to 696 (LESVSSNPNS…MPTSSTSSDS (73 aa)) are disordered. Positions 662-672 (SLPPNPSPTSP) are enriched in pro residues. The residue at position 668 (S668) is a Phosphoserine. T670 carries the post-translational modification Phosphothreonine. S671 bears the Phosphoserine mark. Over residues 673–696 (LSPSWPMFSAPSSPMPTSSTSSDS) the composition is skewed to low complexity. The 59-residue stretch at 756–814 (TPFRKAKALYACKAEHDSELSFTAGTVFDNVHPSQEPGWLEGTLNGKTGLIPENYVEFL) folds into the SH3 domain.

As to quaternary structure, interacts with NYAP1, NYAP2 and MYO16. Interacts with MICAL1 and WDR44. Binds to the C-terminus of PTK2/FAK1. (Microbial infection) Interacts with human parainfluenza virus type 2 proteins P and V. Post-translationally, phosphorylated in a PINK1-dependent fashion promoting retrograde mitochondrial trafficking and clustering.

It localises to the endosome membrane. The protein resides in the cytoplasm. The protein localises to the cell junction. It is found in the focal adhesion. Its subcellular location is the cytoskeleton. Functionally, GTPase-activating protein for RHOA and CDC42. Facilitates mitochondrial quality control by promoting Parkin-mediated recruitment of autophagosomes to damaged mitochondria. Negatively regulates the growth of human parainfluenza virus type 2 by inhibiting hPIV-2-mediated RHOA activation via interaction with two of its viral proteins P and V. Its function is as follows. Associates with MICAL1 on the endosomal membrane to promote Rab8-Rab10-dependent tubule extension. After dissociation of MICAL1, recruits WDR44 which connects the endoplasmic reticulum (ER) with the endosomal tubule, thereby participating in the export of a subset of neosynthesized proteins. The protein is Rho GTPase-activating protein 26 (ARHGAP26) of Homo sapiens (Human).